The chain runs to 562 residues: T-complex protein 1 subunit epsilon (562 aa).

It belongs to the TCP-1 chaperonin family. Heterooligomeric complex of about 850 to 900 kDa that forms two stacked rings, 12 to 16 nm in diameter.

It localises to the cytoplasm. In terms of biological role, molecular chaperone; assists the folding of proteins upon ATP hydrolysis. Known to play a role, in vitro, in the folding of actin and tubulin. In yeast may play a role in mitotic spindle formation. This is T-complex protein 1 subunit epsilon (CCT5) from Saccharomyces cerevisiae (strain ATCC 204508 / S288c) (Baker's yeast).